The primary structure comprises 486 residues: MSASDSSSAVVVLAAGAGTRMKSDLQKTLHSIGGRSLISHSLHAAAGLNPTHIVAVIGHGRDQVGPAVEDVATHLGREVRIAIQEEQNGTGHAVQCAMDQLEGFDGTIIVTNGDVPLLTSDTLGSLLAAHTATPTAVTVLTMNLDDPTGYGRIVRNADGEVTAIVEQKDASDEERSITEVNSGVFAFDATILRSALSQLKSDNAQGELYLTDVLGIARSEGHPVRAHIAADARELAGVNDRVQLAEAGAELNRRTVEAAMRGGATIVDPATTWIDVEVTIGRDVLINPGTQLRGTTSIGDRAEIGPDTTLTNMVIGTGASVIRTHGSDSEIGEDATVGPFTYIRPGTKLGAEGKLGGFVETKKATIGRGSKVPHLTYVGDATIGEYSNIGASSVFVNYDGVNKNHTTIGSHVRTGSDTMFIAPVTVGDGAYSGAGTVIKDDVPPGALAVSGGRQRNIEGWVQKKRPGTAAADAAAAAQNSVPNQEG.

Residues 1–241 (MSASDSSSAV…ARELAGVNDR (241 aa)) are pyrophosphorylase. UDP-N-acetyl-alpha-D-glucosamine is bound by residues 13-16 (LAAG), K27, Q84, and 89-90 (GT). Residue D114 participates in Mg(2+) binding. UDP-N-acetyl-alpha-D-glucosamine contacts are provided by G151, E166, N181, and N239. A Mg(2+)-binding site is contributed by N239. The segment at 242 to 262 (VQLAEAGAELNRRTVEAAMRG) is linker. The tract at residues 263-486 (GATIVDPATT…AQNSVPNQEG (224 aa)) is N-acetyltransferase. UDP-N-acetyl-alpha-D-glucosamine contacts are provided by R344 and K362. H374 functions as the Proton acceptor in the catalytic mechanism. Residues Y377 and N388 each contribute to the UDP-N-acetyl-alpha-D-glucosamine site. Residues A391, 397 to 398 (NY), S416, and A434 contribute to the acetyl-CoA site. Residues 464-486 (KRPGTAAADAAAAAQNSVPNQEG) form a disordered region.

The protein in the N-terminal section; belongs to the N-acetylglucosamine-1-phosphate uridyltransferase family. In the C-terminal section; belongs to the transferase hexapeptide repeat family. In terms of assembly, homotrimer. Requires Mg(2+) as cofactor.

Its subcellular location is the cytoplasm. It carries out the reaction alpha-D-glucosamine 1-phosphate + acetyl-CoA = N-acetyl-alpha-D-glucosamine 1-phosphate + CoA + H(+). It catalyses the reaction N-acetyl-alpha-D-glucosamine 1-phosphate + UTP + H(+) = UDP-N-acetyl-alpha-D-glucosamine + diphosphate. It functions in the pathway nucleotide-sugar biosynthesis; UDP-N-acetyl-alpha-D-glucosamine biosynthesis; N-acetyl-alpha-D-glucosamine 1-phosphate from alpha-D-glucosamine 6-phosphate (route II): step 2/2. Its pathway is nucleotide-sugar biosynthesis; UDP-N-acetyl-alpha-D-glucosamine biosynthesis; UDP-N-acetyl-alpha-D-glucosamine from N-acetyl-alpha-D-glucosamine 1-phosphate: step 1/1. The protein operates within bacterial outer membrane biogenesis; LPS lipid A biosynthesis. Functionally, catalyzes the last two sequential reactions in the de novo biosynthetic pathway for UDP-N-acetylglucosamine (UDP-GlcNAc). The C-terminal domain catalyzes the transfer of acetyl group from acetyl coenzyme A to glucosamine-1-phosphate (GlcN-1-P) to produce N-acetylglucosamine-1-phosphate (GlcNAc-1-P), which is converted into UDP-GlcNAc by the transfer of uridine 5-monophosphate (from uridine 5-triphosphate), a reaction catalyzed by the N-terminal domain. This chain is Bifunctional protein GlmU, found in Corynebacterium efficiens (strain DSM 44549 / YS-314 / AJ 12310 / JCM 11189 / NBRC 100395).